The following is an 81-amino-acid chain: Cytochrome b559 subunit alpha (81 aa).

A helical membrane pass occupies residues 21 to 35 (VIHSITIPMLFIAGW). H23 lines the heme pocket.

It belongs to the PsbE/PsbF family. Heterodimer of an alpha subunit and a beta subunit. PSII is composed of 1 copy each of membrane proteins PsbA, PsbB, PsbC, PsbD, PsbE, PsbF, PsbH, PsbI, PsbJ, PsbK, PsbL, PsbM, PsbT, PsbX, PsbY, PsbZ, Psb30/Ycf12, peripheral proteins PsbO, CyanoQ (PsbQ), PsbU, PsbV and a large number of cofactors. It forms dimeric complexes. Requires heme b as cofactor.

It localises to the cellular thylakoid membrane. Its function is as follows. This b-type cytochrome is tightly associated with the reaction center of photosystem II (PSII). PSII is a light-driven water:plastoquinone oxidoreductase that uses light energy to abstract electrons from H(2)O, generating O(2) and a proton gradient subsequently used for ATP formation. It consists of a core antenna complex that captures photons, and an electron transfer chain that converts photonic excitation into a charge separation. The sequence is that of Cytochrome b559 subunit alpha from Rippkaea orientalis (strain PCC 8801 / RF-1) (Cyanothece sp. (strain PCC 8801)).